The sequence spans 430 residues: Histidine--tRNA ligase (430 aa).

Belongs to the class-II aminoacyl-tRNA synthetase family. Homodimer.

The protein resides in the cytoplasm. The enzyme catalyses tRNA(His) + L-histidine + ATP = L-histidyl-tRNA(His) + AMP + diphosphate + H(+). This chain is Histidine--tRNA ligase (hisS), found in Chlamydia pneumoniae (Chlamydophila pneumoniae).